Here is a 1483-residue protein sequence, read N- to C-terminus: Ubiquitin fusion degradation protein 4 (1483 aa).

Residues 1–117 (MSENNSHNLD…NNEFGSNPLH (117 aa)) are disordered. The segment covering 8–18 (NLDEHESHSEN) has biased composition (basic and acidic residues). Residues 61–70 (EADDGEDDDN) show a composition bias toward acidic residues. Thr-87 carries the post-translational modification Phosphothreonine. Residue Lys-349 forms a Glycyl lysine isopeptide (Lys-Gly) (interchain with G-Cter in ubiquitin) linkage. Residues 1007–1081 (CGVKSDSFIN…LIQLWKNKSK (75 aa)) form a K-box region. The region spanning 1376–1483 (AEHGYTMDSS…EEGAGAFLLS (108 aa)) is the HECT domain. Cys-1450 (glycyl thioester intermediate) is an active-site residue.

This sequence belongs to the UPL family. K-HECT subfamily.

The enzyme catalyses S-ubiquitinyl-[E2 ubiquitin-conjugating enzyme]-L-cysteine + [acceptor protein]-L-lysine = [E2 ubiquitin-conjugating enzyme]-L-cysteine + N(6)-ubiquitinyl-[acceptor protein]-L-lysine.. Functionally, E3 ubiquitin-protein ligase which accepts ubiquitin from an E2 ubiquitin-conjugating enzyme in the form of a thioester and then directly transfers the ubiquitin to targeted substrates. This chain is Ubiquitin fusion degradation protein 4 (UFD4), found in Saccharomyces cerevisiae (strain ATCC 204508 / S288c) (Baker's yeast).